The following is a 381-amino-acid chain: MSTNHLLEIKQYGQSIWMDNLTRDIIQSGELKDMVENQGISGITSNPAIFEKAIAGNAIYDADIEAGVRAGLPIYKIYESLVFADIRNACDILRPVYEASNRLDGYVSIEVPPTIAHDTEATISEARRYFQEIGRENLMIKIPGTEPGLPAVEQVIAEGMNVNITLLFSVESYVNTAWAYVRGLEKRLAEGKDISRIASVASFFLSRIDSNIDAKIDAKLKKGVDDIAVEAKLKAVKGKVAIANAKLAYQEYKKIIRSERWQELVAKGATVQRLLWASTSTKDPNYNDVMYIEELVGPDTVNTVPPATIKACADHCNVSDRLETDVNNAYTLIENLKDPDINIDLDTVMDELLVEGIDKFIQPFQSLMNSLEDKIKVLSPV.

The active-site Schiff-base intermediate with substrate is the lysine 141.

The protein belongs to the transaldolase family. Type 2 subfamily.

The protein resides in the cytoplasm. The catalysed reaction is D-sedoheptulose 7-phosphate + D-glyceraldehyde 3-phosphate = D-erythrose 4-phosphate + beta-D-fructose 6-phosphate. It functions in the pathway carbohydrate degradation; pentose phosphate pathway; D-glyceraldehyde 3-phosphate and beta-D-fructose 6-phosphate from D-ribose 5-phosphate and D-xylulose 5-phosphate (non-oxidative stage): step 2/3. Transaldolase is important for the balance of metabolites in the pentose-phosphate pathway. This Nostoc punctiforme (strain ATCC 29133 / PCC 73102) protein is Transaldolase 2 (tal2).